We begin with the raw amino-acid sequence, 164 residues long: UPF0262 protein Nham_0287 (164 aa).

Belongs to the UPF0262 family.

The sequence is that of UPF0262 protein Nham_0287 from Nitrobacter hamburgensis (strain DSM 10229 / NCIMB 13809 / X14).